Reading from the N-terminus, the 349-residue chain is Cdc42 effector protein 4 (349 aa).

An N6-methyllysine modification is found at K5. S18 carries the phosphoserine modification. Residues 27–41 enclose the CRIB domain; the sequence is ISAPLGDFRHTMHVG. A phosphoserine mark is found at S64, S103, S107, and S116. Residues 123–132 show a composition bias toward basic and acidic residues; the sequence is KEAAEKDSSK. Disordered stretches follow at residues 123-172, 220-240, and 278-349; these read KEAA…LLDE, QWGSEEEEEAGGYRDKEGPSS, and GWAV…EIRV. A phosphoserine mark is found at S136, S138, S140, S154, S165, S223, S285, and S288. Over residues 280-308 the composition is skewed to low complexity; that stretch reads AVVAPSPSSARSVGSHTTRDSSSLSSYTS. Positions 311-322 are enriched in basic and acidic residues; the sequence is LEERSPAFRGPD. Acidic residues predominate over residues 338–349; sequence FMDEEEEDEIRV.

It belongs to the BORG/CEP family. As to quaternary structure, interacts with CDC42 and RHOQ, in a GTP-dependent manner. Ubiquitous.

Its subcellular location is the endomembrane system. It is found in the cytoplasm. The protein resides in the cytoskeleton. In terms of biological role, probably involved in the organization of the actin cytoskeleton. May act downstream of CDC42 to induce actin filament assembly leading to cell shape changes. Induces pseudopodia formation, when overexpressed in fibroblasts. This is Cdc42 effector protein 4 (Cdc42ep4) from Mus musculus (Mouse).